Consider the following 228-residue polypeptide: 7-cyano-7-deazaguanine synthase (228 aa).

16–26 (FSGGQDSTTCL) provides a ligand contact to ATP. Zn(2+)-binding residues include cysteine 195, cysteine 203, cysteine 206, and cysteine 209.

This sequence belongs to the QueC family. It depends on Zn(2+) as a cofactor.

The catalysed reaction is 7-carboxy-7-deazaguanine + NH4(+) + ATP = 7-cyano-7-deazaguanine + ADP + phosphate + H2O + H(+). The protein operates within purine metabolism; 7-cyano-7-deazaguanine biosynthesis. In terms of biological role, catalyzes the ATP-dependent conversion of 7-carboxy-7-deazaguanine (CDG) to 7-cyano-7-deazaguanine (preQ(0)). The protein is 7-cyano-7-deazaguanine synthase of Haemophilus influenzae (strain ATCC 51907 / DSM 11121 / KW20 / Rd).